The sequence spans 59 residues: Conotoxin Bu1.2 (59 aa).

Residues 1–16 form the signal peptide; that stretch reads MFTVFLLVVLATTVVS. The propeptide occupies 17 to 42; sequence FSTDDESDGSNEEPSADQAARSAMNR. Residues 18–43 are disordered; that stretch reads STDDESDGSNEEPSADQAARSAMNRP. Positions 19–31 are enriched in acidic residues; that stretch reads TDDESDGSNEEPS. 2 disulfide bridges follow: cysteine 46–cysteine 52 and cysteine 47–cysteine 57. The residue at position 58 (glycine 58) is a Glycine amide.

Belongs to the conotoxin A superfamily. Expressed by the venom duct.

Its subcellular location is the secreted. This is Conotoxin Bu1.2 from Conus bullatus (Bubble cone).